Here is a 353-residue protein sequence, read N- to C-terminus: Holliday junction branch migration complex subunit RuvB (353 aa).

Residues 1–25 (MDPGPAGDEVSLAPQQETAEQDVET) are disordered. Residues 1-188 (MDPGPAGDEV…FGFTAHMEFY (188 aa)) form a large ATPase domain (RuvB-L) region. ATP contacts are provided by residues Leu27, Arg28, Gly69, Lys72, Thr73, Ser74, 135–137 (EDY), Arg178, Tyr188, and Arg225. Thr73 contacts Mg(2+). Residues 189 to 259 (EPAELELVVR…VARAALEVYD (71 aa)) form a small ATPAse domain (RuvB-S) region. The tract at residues 262 to 353 (EHGLDRLDRA…ATRSLFADEV (92 aa)) is head domain (RuvB-H). The DNA site is built by Arg317 and Arg322.

This sequence belongs to the RuvB family. Homohexamer. Forms an RuvA(8)-RuvB(12)-Holliday junction (HJ) complex. HJ DNA is sandwiched between 2 RuvA tetramers; dsDNA enters through RuvA and exits via RuvB. An RuvB hexamer assembles on each DNA strand where it exits the tetramer. Each RuvB hexamer is contacted by two RuvA subunits (via domain III) on 2 adjacent RuvB subunits; this complex drives branch migration. In the full resolvosome a probable DNA-RuvA(4)-RuvB(12)-RuvC(2) complex forms which resolves the HJ.

It is found in the cytoplasm. It carries out the reaction ATP + H2O = ADP + phosphate + H(+). Functionally, the RuvA-RuvB-RuvC complex processes Holliday junction (HJ) DNA during genetic recombination and DNA repair, while the RuvA-RuvB complex plays an important role in the rescue of blocked DNA replication forks via replication fork reversal (RFR). RuvA specifically binds to HJ cruciform DNA, conferring on it an open structure. The RuvB hexamer acts as an ATP-dependent pump, pulling dsDNA into and through the RuvAB complex. RuvB forms 2 homohexamers on either side of HJ DNA bound by 1 or 2 RuvA tetramers; 4 subunits per hexamer contact DNA at a time. Coordinated motions by a converter formed by DNA-disengaged RuvB subunits stimulates ATP hydrolysis and nucleotide exchange. Immobilization of the converter enables RuvB to convert the ATP-contained energy into a lever motion, pulling 2 nucleotides of DNA out of the RuvA tetramer per ATP hydrolyzed, thus driving DNA branch migration. The RuvB motors rotate together with the DNA substrate, which together with the progressing nucleotide cycle form the mechanistic basis for DNA recombination by continuous HJ branch migration. Branch migration allows RuvC to scan DNA until it finds its consensus sequence, where it cleaves and resolves cruciform DNA. In Saccharopolyspora erythraea (strain ATCC 11635 / DSM 40517 / JCM 4748 / NBRC 13426 / NCIMB 8594 / NRRL 2338), this protein is Holliday junction branch migration complex subunit RuvB.